Reading from the N-terminus, the 725-residue chain is Prolyl 3-hydroxylase 1 (725 aa).

The signal sequence occupies residues 1 to 14 (MALLLPLLPLLVWA). The stretch at 36–69 (PDALFAAGAEAYARGDWPAVVLQMERALRARAAI) is one TPR 1 repeat. N-linked (GlcNAc...) asparagine glycosylation is present at Asn-82. TPR repeat units follow at residues 136–169 (RSPYNYLQVAYFKINKVAKAVAAAHTFFVANPEH), 198–231 (HMTEFRLGVRFYSEEQPAAAVLHLEKALQEYFVA), and 294–327 (PSHFNYLQFAYYNNGNYEKAIECAKTYLLFFPND). The stretch at 394 to 441 (KRLREKQKVERETAARISEEIGNLMKEIETLVEEKAKESAEMSKFIRE) forms a coiled coil. 2 N-linked (GlcNAc...) asparagine glycosylation sites follow: Asn-460 and Asn-533. A Fe2OG dioxygenase domain is found at 557 to 671 (SHLVCRTAID…RCAIALWFTL (115 aa)). Fe cation is bound by residues His-580, Asp-582, and His-652. Residue Arg-662 is part of the active site. Polar residues predominate over residues 701–715 (ETSAEQEPTAATSTA). The tract at residues 701 to 725 (ETSAEQEPTAATSTAGLHAAGKDEL) is disordered. Positions 722–725 (KDEL) match the Prevents secretion from ER motif.

This sequence belongs to the leprecan family. Binds unfolded collagen in a complex with CYPB and CRTAP. Fe cation is required as a cofactor. It depends on L-ascorbate as a cofactor. Expressed in embryonic dermis, tendon, cartilage, liver and kidney. Expression in the kidney is restricted to the calyx. In the liver, expression is restricted to the interlobular septum.

Its subcellular location is the endoplasmic reticulum. The catalysed reaction is L-prolyl-[collagen] + 2-oxoglutarate + O2 = trans-3-hydroxy-L-prolyl-[collagen] + succinate + CO2. Has prolyl 3-hydroxylase activity catalyzing the post-translational formation of 3-hydroxyproline in -Xaa-Pro-Gly-sequences in collagens, especially types IV and V. May be involved in the secretoty pathway of cells. Has growth suppressive activity in fibroblasts. The sequence is that of Prolyl 3-hydroxylase 1 from Gallus gallus (Chicken).